Here is a 430-residue protein sequence, read N- to C-terminus: Putative aspergillopepsin A-like aspartic endopeptidase MCYG_07979 (430 aa).

The first 17 residues, 1 to 17, serve as a signal peptide directing secretion; the sequence is MHLSSLLVAVLLPLALS. Residues 18–87 constitute a propeptide, activation peptide; sequence KPTPRKKPGS…SKIAGGAPGA (70 aa). A disordered region spans residues 59-105; that stretch reads STQGMDGYRPEPISRFQGNSKIAGGAPGAKDDGKDEKGEVENNPTSH. A compositionally biased stretch (basic and acidic residues) spans 87–98; it reads AKDDGKDEKGEV. The 319-residue stretch at 109–427 folds into the Peptidase A1 domain; that stretch reads FLSPVTIGGQ…DYRGPSVSLA (319 aa). Aspartate 125 is a catalytic residue. Residue asparagine 306 is glycosylated (N-linked (GlcNAc...) asparagine). Residue aspartate 314 is part of the active site. A glycan (N-linked (GlcNAc...) asparagine) is linked at asparagine 352.

It belongs to the peptidase A1 family.

The protein localises to the secreted. The chain is Putative aspergillopepsin A-like aspartic endopeptidase MCYG_07979 from Arthroderma otae (strain ATCC MYA-4605 / CBS 113480) (Microsporum canis).